A 338-amino-acid polypeptide reads, in one-letter code: 1-aminocyclopropane-1-carboxylate deaminase (338 aa).

Lysine 51 is subject to N6-(pyridoxal phosphate)lysine. Serine 78 serves as the catalytic Nucleophile.

Belongs to the ACC deaminase/D-cysteine desulfhydrase family. Homotrimer. Pyridoxal 5'-phosphate serves as cofactor.

The catalysed reaction is 1-aminocyclopropane-1-carboxylate + H2O = 2-oxobutanoate + NH4(+). In terms of biological role, catalyzes a cyclopropane ring-opening reaction, the irreversible conversion of 1-aminocyclopropane-1-carboxylate (ACC) to ammonia and alpha-ketobutyrate. Allows growth on ACC as a nitrogen source. In Paraburkholderia xenovorans (strain LB400), this protein is 1-aminocyclopropane-1-carboxylate deaminase.